A 96-amino-acid chain; its full sequence is Co-chaperonin GroES (96 aa).

This sequence belongs to the GroES chaperonin family. In terms of assembly, heptamer of 7 subunits arranged in a ring. Interacts with the chaperonin GroEL.

The protein localises to the cytoplasm. Its function is as follows. Together with the chaperonin GroEL, plays an essential role in assisting protein folding. The GroEL-GroES system forms a nano-cage that allows encapsulation of the non-native substrate proteins and provides a physical environment optimized to promote and accelerate protein folding. GroES binds to the apical surface of the GroEL ring, thereby capping the opening of the GroEL channel. The protein is Co-chaperonin GroES of Acidithiobacillus ferrooxidans (strain ATCC 23270 / DSM 14882 / CIP 104768 / NCIMB 8455) (Ferrobacillus ferrooxidans (strain ATCC 23270)).